A 586-amino-acid chain; its full sequence is MASSSLVTSLLFSSSSSSNTATSTSSRRSFSLFSKNQYCKPRPLRRSSSRLLVRCSLQQQQEEKAAPAAESHHAGGGQDDAATASHHAVEGENGVADADGGGVKKSKEELEEEEQQEVDWRSDEEFKRFMGNPSIEAAIKLEKKRADRKLRELDREPDANPLAGLLRGLARGQLAREKERLELAENTFKALDLNKLKSCFGYDTFFAVDVRRFGDGGIFIGNLRKPVEEVRPKLEKKIAEAAGTDVTLWFMEEKNDDITKQVCMVQPKAEIDLQLEITKLSTPWGYLSAVALAVTTFGTIAIMSGFFLKPGATFDDYVSDVLPLFAGFLSILGVSEIATRLTAARYGVKLSPSFLVPSNWTGCLGVMNNYESLLPNKKALFDIPVARAASAYLTSVALAVSAFVSDGSLNGGKNALFVRPEFFYNNPLLSFVQAVIGPYADELGNVLPNAVEGVGVPVDPLAFAGLLGIVVTSLNLLPCGRLEGGRIAQALFGRGAAAVLSFATSVALGAGAIIGGSVLCLAWGLFATFVRGGEEIPAQDEITPLGSERYAWGLVLAVVCLLTLFPNGGGTYSSDFLGAPFFRGGI.

A chloroplast-targeting transit peptide spans 1 to 54 (MASSSLVTSLLFSSSSSSNTATSTSSRRSFSLFSKNQYCKPRPLRRSSSRLLVR). Disordered regions lie at residues 13–32 (SSSS…SFSL) and 58–122 (QQQQ…DWRS). Over residues 61 to 73 (QEEKAAPAAESHH) the composition is skewed to basic and acidic residues. Residues 103-195 (VKKSKEELEE…NTFKALDLNK (93 aa)) adopt a coiled-coil conformation. Helical transmembrane passes span 287–307 (LSAV…SGFF), 318–338 (VSDV…SEIA), 389–409 (ASAY…DGSL), 427–447 (PLLS…GNVL), 454–474 (VGVP…VTSL), 506–526 (VALG…WGLF), and 550–570 (YAWG…NGGG).

The protein belongs to the peptidase M50B family.

The protein resides in the plastid. The protein localises to the chloroplast membrane. Its function is as follows. Probable membrane-associated metalloprotease that may be involved in chloroplast development. This chain is Probable zinc metalloprotease EGY3, chloroplastic (EGY3), found in Oryza sativa subsp. japonica (Rice).